Consider the following 61-residue polypeptide: Chi-conotoxin MrIA (61 aa).

An N-terminal signal peptide occupies residues 1-19 (MRCLPVLIILLLLTASAPG). Positions 20-48 (VVVLPKTEDDVPMSSVYGNGKSILRGILR) are excised as a propeptide. Intrachain disulfides connect cysteine 52–cysteine 61 and cysteine 53–cysteine 58. At proline 60 the chain carries 4-hydroxyproline.

This sequence belongs to the conotoxin T superfamily. Expressed by the venom duct.

It is found in the secreted. Functionally, chi-conotoxins inhibit the neuronal noradrenaline transporter (NET/SLC6A2). Activity has been described on both human (inhibition of norepinephrine uptake is IC(50)=1.26 uM) and rat (pIC(50)=6.21 corresponding IC(50)=0.16 uM) transporters. Acts as a reversible non-competitive inhibitor. The polypeptide is Chi-conotoxin MrIA (Conus marmoreus (Marble cone)).